Reading from the N-terminus, the 169-residue chain is MEQIIVGVADCRVGHAPEQVLATYALGSCIGLSIYDPKAAIGGMLHYMLPDSTIDPARGRENPYMFADTGIPKLVEQVCGRGANRRRLIAHAAGGASMMDPQAVFDIGKRNYLALRKILWKAGILLAGEAVGGTNSRTVRLEIGSGRLWLQENGKQKELVPSFPQKGGN.

The protein belongs to the CheD family.

It carries out the reaction L-glutaminyl-[protein] + H2O = L-glutamyl-[protein] + NH4(+). Probably deamidates glutamine residues to glutamate on methyl-accepting chemotaxis receptors (MCPs), playing an important role in chemotaxis. The sequence is that of Probable chemoreceptor glutamine deamidase CheD from Solibacter usitatus (strain Ellin6076).